Here is a 454-residue protein sequence, read N- to C-terminus: tRNA modification GTPase MnmE (454 aa).

(6S)-5-formyl-5,6,7,8-tetrahydrofolate is bound by residues Arg23, Glu80, and Lys120. A TrmE-type G domain is found at 216-377; that stretch reads GMKVVIAGRP…LRDHLKQSMG (162 aa). A K(+)-binding site is contributed by Asn226. GTP is bound by residues 226–231, 245–251, 270–273, 335–338, and 358–360; these read NAGKSS, TDIAGTT, DTAG, NKAD, and SAR. Position 230 (Ser230) interacts with Mg(2+). K(+) is bound by residues Thr245, Ile247, and Thr250. Thr251 lines the Mg(2+) pocket. Lys454 is a binding site for (6S)-5-formyl-5,6,7,8-tetrahydrofolate.

It belongs to the TRAFAC class TrmE-Era-EngA-EngB-Septin-like GTPase superfamily. TrmE GTPase family. As to quaternary structure, homodimer. Heterotetramer of two MnmE and two MnmG subunits. The cofactor is K(+).

Its subcellular location is the cytoplasm. In terms of biological role, exhibits a very high intrinsic GTPase hydrolysis rate. Involved in the addition of a carboxymethylaminomethyl (cmnm) group at the wobble position (U34) of certain tRNAs, forming tRNA-cmnm(5)s(2)U34. The sequence is that of tRNA modification GTPase MnmE from Yersinia pestis.